Here is a 195-residue protein sequence, read N- to C-terminus: Peptidyl-tRNA hydrolase (195 aa).

Y17 provides a ligand contact to tRNA. The active-site Proton acceptor is the H22. Residues Y68, N70, and N116 each contribute to the tRNA site.

This sequence belongs to the PTH family. In terms of assembly, monomer.

The protein resides in the cytoplasm. It catalyses the reaction an N-acyl-L-alpha-aminoacyl-tRNA + H2O = an N-acyl-L-amino acid + a tRNA + H(+). Hydrolyzes ribosome-free peptidyl-tRNAs (with 1 or more amino acids incorporated), which drop off the ribosome during protein synthesis, or as a result of ribosome stalling. Functionally, catalyzes the release of premature peptidyl moieties from peptidyl-tRNA molecules trapped in stalled 50S ribosomal subunits, and thus maintains levels of free tRNAs and 50S ribosomes. This chain is Peptidyl-tRNA hydrolase, found in Shewanella oneidensis (strain ATCC 700550 / JCM 31522 / CIP 106686 / LMG 19005 / NCIMB 14063 / MR-1).